A 266-amino-acid polypeptide reads, in one-letter code: Ankyrin repeat domain-containing protein 45 (266 aa).

2 stretches are compositionally biased toward acidic residues: residues Met-1–Ser-11 and Gln-18–Glu-32. The tract at residues Met-1–Ala-43 is disordered. ANK repeat units lie at residues Val-76–Glu-105 and Arg-109–Ala-138.

The protein resides in the cytoplasm. Its subcellular location is the midbody. It localises to the midbody ring. The protein localises to the cleavage furrow. May play a role during cell division. The chain is Ankyrin repeat domain-containing protein 45 from Homo sapiens (Human).